The sequence spans 294 residues: Indole-3-glycerol phosphate synthase (294 aa).

The protein belongs to the TrpC family.

It carries out the reaction 1-(2-carboxyphenylamino)-1-deoxy-D-ribulose 5-phosphate + H(+) = (1S,2R)-1-C-(indol-3-yl)glycerol 3-phosphate + CO2 + H2O. Its pathway is amino-acid biosynthesis; L-tryptophan biosynthesis; L-tryptophan from chorismate: step 4/5. The chain is Indole-3-glycerol phosphate synthase from Crocosphaera subtropica (strain ATCC 51142 / BH68) (Cyanothece sp. (strain ATCC 51142)).